A 728-amino-acid chain; its full sequence is Dehydrocurvularin biosynthesis regulator (728 aa).

A DNA-binding region (zn(2)-C6 fungal-type) is located at residues 28–58 (CWECKRRKMKCRFDPRIASACNGCRRRGSPC). Disordered stretches follow at residues 75–130 (GTTS…TSQR) and 606–626 (QHAT…NSDA). The span at 89 to 109 (RATTPSERTDQILTPVSTVRE) shows a compositional bias: polar residues.

The protein resides in the nucleus. In terms of biological role, transcription factor involved in regulation of the dehydrocurvularin biosynthesis gene cluster. This Aspergillus terreus protein is Dehydrocurvularin biosynthesis regulator.